The sequence spans 304 residues: RING-H2 finger protein ATL2 (304 aa).

The helical transmembrane segment at 30 to 50 threads the bilayer; it reads IMLSAIVILFFVVILMVFLHL. The RING-type; atypical zinc-finger motif lies at 119–161; the sequence is CAVCLSEFEESETGRVLPNCQHTFHVDCIDMWFHSHSTCPLCR. Residues 194 to 304 form a disordered region; it reads EPSSSSGLTD…DIERGGEESR (111 aa). Residues 227–244 are compositionally biased toward basic and acidic residues; that stretch reads VPRRTFSEFEDELTRRDS. Residues 283 to 293 show a composition bias toward polar residues; that stretch reads PTLSCRIQMTE. Residues 295 to 304 are compositionally biased toward basic and acidic residues; it reads DIERGGEESR.

It belongs to the RING-type zinc finger family. ATL subfamily. Preferentially expressed around the apical meristem region.

It localises to the membrane. It carries out the reaction S-ubiquitinyl-[E2 ubiquitin-conjugating enzyme]-L-cysteine + [acceptor protein]-L-lysine = [E2 ubiquitin-conjugating enzyme]-L-cysteine + N(6)-ubiquitinyl-[acceptor protein]-L-lysine.. The protein operates within protein modification; protein ubiquitination. May be involved in the early steps of the plant defense signaling pathway. This chain is RING-H2 finger protein ATL2 (ATL2), found in Arabidopsis thaliana (Mouse-ear cress).